Consider the following 201-residue polypeptide: Recombination protein RecR (201 aa).

A C4-type zinc finger spans residues 57-72 (CADCRTFTEQDVCNIC). One can recognise a Toprim domain in the interval 81–176 (GQICVVESPA…EASRIAHGVP (96 aa)).

It belongs to the RecR family.

Its function is as follows. May play a role in DNA repair. It seems to be involved in an RecBC-independent recombinational process of DNA repair. It may act with RecF and RecO. The sequence is that of Recombination protein RecR from Salmonella agona (strain SL483).